We begin with the raw amino-acid sequence, 433 residues long: Enolase (433 aa).

Position 167 (Q167) interacts with (2R)-2-phosphoglycerate. E209 serves as the catalytic Proton donor. Residues D246, E291, and D318 each coordinate Mg(2+). (2R)-2-phosphoglycerate contacts are provided by K343, R372, S373, and K394. The Proton acceptor role is filled by K343.

The protein belongs to the enolase family. In terms of assembly, component of the RNA degradosome, a multiprotein complex involved in RNA processing and mRNA degradation. Requires Mg(2+) as cofactor.

The protein localises to the cytoplasm. It is found in the secreted. The protein resides in the cell surface. It catalyses the reaction (2R)-2-phosphoglycerate = phosphoenolpyruvate + H2O. It participates in carbohydrate degradation; glycolysis; pyruvate from D-glyceraldehyde 3-phosphate: step 4/5. Functionally, catalyzes the reversible conversion of 2-phosphoglycerate (2-PG) into phosphoenolpyruvate (PEP). It is essential for the degradation of carbohydrates via glycolysis. The polypeptide is Enolase (Photorhabdus laumondii subsp. laumondii (strain DSM 15139 / CIP 105565 / TT01) (Photorhabdus luminescens subsp. laumondii)).